Consider the following 725-residue polypeptide: Putative oligopeptide transporter YGL114W (725 aa).

9 helical membrane-spanning segments follow: residues 28-48 (ATIA…QFGL), 134-154 (FREL…FAVP), 254-274 (IIIL…SYFV), 353-373 (WILW…FIVV), 449-469 (ISGC…LFGI), 472-492 (IPLY…ILGI), 564-584 (FCAQ…MYLC), 644-664 (YGYG…GIFN), and 697-717 (IVFS…NMLF).

This sequence belongs to the oligopeptide OPT transporter family.

The protein resides in the membrane. The polypeptide is Putative oligopeptide transporter YGL114W (Saccharomyces cerevisiae (strain ATCC 204508 / S288c) (Baker's yeast)).